Consider the following 364-residue polypeptide: UDP-3-O-acylglucosamine N-acyltransferase (364 aa).

The active-site Proton acceptor is the histidine 257.

The protein belongs to the transferase hexapeptide repeat family. LpxD subfamily. Homotrimer.

The enzyme catalyses a UDP-3-O-[(3R)-3-hydroxyacyl]-alpha-D-glucosamine + a (3R)-hydroxyacyl-[ACP] = a UDP-2-N,3-O-bis[(3R)-3-hydroxyacyl]-alpha-D-glucosamine + holo-[ACP] + H(+). It functions in the pathway bacterial outer membrane biogenesis; LPS lipid A biosynthesis. Catalyzes the N-acylation of UDP-3-O-acylglucosamine using 3-hydroxyacyl-ACP as the acyl donor. Is involved in the biosynthesis of lipid A, a phosphorylated glycolipid that anchors the lipopolysaccharide to the outer membrane of the cell. In Paracoccus denitrificans (strain Pd 1222), this protein is UDP-3-O-acylglucosamine N-acyltransferase.